A 160-amino-acid chain; its full sequence is 6,7-dimethyl-8-ribityllumazine synthase (160 aa).

Residues F28, 62–64 (ALE), and 86–88 (AVI) each bind 5-amino-6-(D-ribitylamino)uracil. 91-92 (ET) lines the (2S)-2-hydroxy-3-oxobutyl phosphate pocket. H94 (proton donor) is an active-site residue. Residue N119 coordinates 5-amino-6-(D-ribitylamino)uracil. R133 lines the (2S)-2-hydroxy-3-oxobutyl phosphate pocket.

The protein belongs to the DMRL synthase family.

It catalyses the reaction (2S)-2-hydroxy-3-oxobutyl phosphate + 5-amino-6-(D-ribitylamino)uracil = 6,7-dimethyl-8-(1-D-ribityl)lumazine + phosphate + 2 H2O + H(+). It participates in cofactor biosynthesis; riboflavin biosynthesis; riboflavin from 2-hydroxy-3-oxobutyl phosphate and 5-amino-6-(D-ribitylamino)uracil: step 1/2. In terms of biological role, catalyzes the formation of 6,7-dimethyl-8-ribityllumazine by condensation of 5-amino-6-(D-ribitylamino)uracil with 3,4-dihydroxy-2-butanone 4-phosphate. This is the penultimate step in the biosynthesis of riboflavin. This chain is 6,7-dimethyl-8-ribityllumazine synthase, found in Nitrosospira multiformis (strain ATCC 25196 / NCIMB 11849 / C 71).